The primary structure comprises 209 residues: Uracil phosphoribosyltransferase (209 aa).

5-phospho-alpha-D-ribose 1-diphosphate is bound by residues Arg79, Arg104, and 131-139 (DPMLATGNS). Uracil contacts are provided by residues Ile194 and 199–201 (GDA). Residue Asp200 participates in 5-phospho-alpha-D-ribose 1-diphosphate binding.

Belongs to the UPRTase family. Mg(2+) is required as a cofactor.

The catalysed reaction is UMP + diphosphate = 5-phospho-alpha-D-ribose 1-diphosphate + uracil. It participates in pyrimidine metabolism; UMP biosynthesis via salvage pathway; UMP from uracil: step 1/1. Allosterically activated by GTP. In terms of biological role, catalyzes the conversion of uracil and 5-phospho-alpha-D-ribose 1-diphosphate (PRPP) to UMP and diphosphate. The chain is Uracil phosphoribosyltransferase from Delftia acidovorans (strain DSM 14801 / SPH-1).